A 266-amino-acid chain; its full sequence is Exosome complex component Rrp42 (266 aa).

Belongs to the RNase PH family. Rrp42 subfamily. In terms of assembly, component of the archaeal exosome complex. Forms a hexameric ring-like arrangement composed of 3 Rrp41-Rrp42 heterodimers. The hexameric ring associates with a trimer of Rrp4 and/or Csl4 subunits.

It is found in the cytoplasm. Its function is as follows. Non-catalytic component of the exosome, which is a complex involved in RNA degradation. Contributes to the structuring of the Rrp41 active site. The protein is Exosome complex component Rrp42 of Methanosarcina mazei (strain ATCC BAA-159 / DSM 3647 / Goe1 / Go1 / JCM 11833 / OCM 88) (Methanosarcina frisia).